Here is a 555-residue protein sequence, read N- to C-terminus: Polypyrimidine tract-binding protein 1 (555 aa).

Met1 is subject to N-acetylmethionine. Ser16 bears the Phosphoserine mark. 3 consecutive RRM domains span residues 58-142 (RVIH…SSPN), 183-259 (LRII…FSKL), and 361-412 (SVLL…SQAQ). Residue Lys64 forms a Glycyl lysine isopeptide (Lys-Gly) (interchain with G-Cter in SUMO2) linkage. Tyr126 carries the phosphotyrosine modification. The residue at position 137 (Thr137) is a Phosphothreonine. A Phosphoserine modification is found at Ser140. Residue Lys217 forms a Glycyl lysine isopeptide (Lys-Gly) (interchain with G-Cter in SUMO2) linkage. Residues 435–457 (HQSVQLPREGQEDQGLTKDYGSS) form a disordered region. Position 457 is a phosphoserine (Ser457). Residues 478 to 553 (ATLHLSNIPP…HHLRVSFSKS (76 aa)) enclose the RRM 4 domain.

In terms of assembly, monomer. Part of a ternary complex containing KHSRP, PTBP1, PTBP2 and HNRPH1. Interacts with SFPQ. Interacts with RAVER1. Interacts with IVNS1ABP (via BACK domain); the interaction is direct. In terms of tissue distribution, expressed in myoblast; expression gradually decreases during muscle cell differentiation (at protein level).

The protein resides in the nucleus. Functionally, plays a role in pre-mRNA splicing and in the regulation of alternative splicing events. Activates exon skipping of its own pre-mRNA during muscle cell differentiation. Binds to the polypyrimidine tract of introns. May promote RNA looping when bound to two separate polypyrimidine tracts in the same pre-mRNA. May promote the binding of U2 snRNP to pre-mRNA. Cooperates with RAVER1 to modulate switching between mutually exclusive exons during maturation of the TPM1 pre-mRNA. Represses the splicing of MAPT/Tau exon 10. Binds to polypyrimidine-rich controlling element (PCE) of CFTR and promotes exon skipping of CFTR exon 9, thereby antagonizing TIA1 and its role in exon inclusion of CFTR exon 9. Plays a role in the splicing of pyruvate kinase PKM by binding repressively to a polypyrimidine tract flanking PKM exon 9, inhibiting exon 9 inclusion and resulting in exon 10 inclusion and production of the PKM M2 isoform. The protein is Polypyrimidine tract-binding protein 1 (Ptbp1) of Mus musculus (Mouse).